A 76-amino-acid polypeptide reads, in one-letter code: Sec-independent protein translocase protein TatA (76 aa).

A helical transmembrane segment spans residues 1–21; that stretch reads MGSFSIWHWLIVLAVVLLLFG. Residues 43–76 are disordered; sequence MSDEDAKDDARDSGRTIDAKADETVNDVKKTTKS. Residues 50-76 show a composition bias toward basic and acidic residues; the sequence is DDARDSGRTIDAKADETVNDVKKTTKS.

This sequence belongs to the TatA/E family. As to quaternary structure, the Tat system comprises two distinct complexes: a TatABC complex, containing multiple copies of TatA, TatB and TatC subunits, and a separate TatA complex, containing only TatA subunits. Substrates initially bind to the TatABC complex, which probably triggers association of the separate TatA complex to form the active translocon.

It is found in the cell inner membrane. In terms of biological role, part of the twin-arginine translocation (Tat) system that transports large folded proteins containing a characteristic twin-arginine motif in their signal peptide across membranes. TatA could form the protein-conducting channel of the Tat system. The protein is Sec-independent protein translocase protein TatA of Brucella anthropi (strain ATCC 49188 / DSM 6882 / CCUG 24695 / JCM 21032 / LMG 3331 / NBRC 15819 / NCTC 12168 / Alc 37) (Ochrobactrum anthropi).